Here is a 338-residue protein sequence, read N- to C-terminus: Ketol-acid reductoisomerase (NADP(+)) (338 aa).

One can recognise a KARI N-terminal Rossmann domain in the interval 1-181 (MKVFYDKDCD…GGGKAGIIET (181 aa)). NADP(+) is bound by residues 24 to 27 (YGSQ), arginine 47, and serine 52. Histidine 107 is an active-site residue. Glycine 133 contacts NADP(+). Positions 182–327 (NFKEETETDL…AQLRAMMPWI (146 aa)) constitute a KARI C-terminal knotted domain. Residues aspartate 190, glutamate 194, glutamate 226, and glutamate 230 each contribute to the Mg(2+) site. Substrate is bound at residue serine 251.

Belongs to the ketol-acid reductoisomerase family. It depends on Mg(2+) as a cofactor.

It catalyses the reaction (2R)-2,3-dihydroxy-3-methylbutanoate + NADP(+) = (2S)-2-acetolactate + NADPH + H(+). The catalysed reaction is (2R,3R)-2,3-dihydroxy-3-methylpentanoate + NADP(+) = (S)-2-ethyl-2-hydroxy-3-oxobutanoate + NADPH + H(+). It participates in amino-acid biosynthesis; L-isoleucine biosynthesis; L-isoleucine from 2-oxobutanoate: step 2/4. The protein operates within amino-acid biosynthesis; L-valine biosynthesis; L-valine from pyruvate: step 2/4. Involved in the biosynthesis of branched-chain amino acids (BCAA). Catalyzes an alkyl-migration followed by a ketol-acid reduction of (S)-2-acetolactate (S2AL) to yield (R)-2,3-dihydroxy-isovalerate. In the isomerase reaction, S2AL is rearranged via a Mg-dependent methyl migration to produce 3-hydroxy-3-methyl-2-ketobutyrate (HMKB). In the reductase reaction, this 2-ketoacid undergoes a metal-dependent reduction by NADPH to yield (R)-2,3-dihydroxy-isovalerate. The chain is Ketol-acid reductoisomerase (NADP(+)) from Paracidovorax citrulli (strain AAC00-1) (Acidovorax citrulli).